A 67-amino-acid chain; its full sequence is Putative ATP synthase subunit epsilon, mitochondrial (67 aa).

The protein belongs to the eukaryotic ATPase epsilon family. As to quaternary structure, F-type ATPases have 2 components, CF(1) - the catalytic core - and CF(0) - the membrane proton channel. CF(1) has five subunits: alpha(3), beta(3), gamma(1), delta(1), epsilon(1). CF(0) seems to have nine subunits: a, b, c, d, e, f, g, F6 and 8 (or A6L).

It is found in the mitochondrion. It localises to the mitochondrion inner membrane. Its function is as follows. Mitochondrial membrane ATP synthase (F(1)F(0) ATP synthase or Complex V) produces ATP from ADP in the presence of a proton gradient across the membrane which is generated by electron transport complexes of the respiratory chain. F-type ATPases consist of two structural domains, F(1) - containing the extramembraneous catalytic core, and F(0) - containing the membrane proton channel, linked together by a central stalk and a peripheral stalk. During catalysis, ATP synthesis in the catalytic domain of F(1) is coupled via a rotary mechanism of the central stalk subunits to proton translocation. Part of the complex F(1) domain and of the central stalk which is part of the complex rotary element. Rotation of the central stalk against the surrounding alpha(3)beta(3) subunits leads to hydrolysis of ATP in three separate catalytic sites on the beta subunits. The sequence is that of Putative ATP synthase subunit epsilon, mitochondrial (atp15) from Schizosaccharomyces pombe (strain 972 / ATCC 24843) (Fission yeast).